The following is a 635-amino-acid chain: Chaperone protein DnaK (635 aa).

The residue at position 198 (Thr-198) is a Phosphothreonine; by autocatalysis. Residues 597–635 (LYEQDQANNERHDTPETEKAEGDNVVDAEFQEIDDQDKK) are disordered. Positions 604 to 618 (NNERHDTPETEKAEG) are enriched in basic and acidic residues. Acidic residues predominate over residues 620–635 (NVVDAEFQEIDDQDKK).

It belongs to the heat shock protein 70 family.

Functionally, acts as a chaperone. In Zymomonas mobilis subsp. mobilis (strain ATCC 31821 / ZM4 / CP4), this protein is Chaperone protein DnaK.